A 1012-amino-acid chain; its full sequence is Centriole and centriolar satellite protein OFD1 (1012 aa).

The region spanning 70 to 102 (LIGASNSLVADHLQRCGYEYSLSVFFPESGLAK) is the LisH domain. Coiled-coil stretches lie at residues 189-557 (QRIK…ENEV) and 622-662 (DSDL…NSAK). Residues 609–665 (TNYPTAWVEGSSPDSDLEFVANTKARVKELQQEAERLEKAFRSYHRRVIKNSAKSPL) form a mediates homooligomerization region. Positions 615 to 1012 (WVEGSSPDSD…FSHEELDDSW (398 aa)) are mediates the interaction with SDCCAG8. Phosphoserine is present on residues S663, S669, S686, and S720. The interval 719–744 (GSAASRLRGGTSSRRLSSTPLPKAKR) is disordered. The segment covering 720–737 (SAASRLRGGTSSRRLSST) has biased composition (low complexity). S735 carries the post-translational modification Phosphoserine; by PKA. Phosphoserine is present on residues S745, S774, S789, and S811. Residues 757–794 (RSHIASPSPCPDRMPLPSPTESRHSLSIPPVSSPPEQK) form a disordered region. Positions 764-774 (SPCPDRMPLPS) are enriched in pro residues. Disordered regions lie at residues 824 to 904 (FESS…LQEV) and 963 to 1012 (KIIQ…DDSW). Residues 867-956 (SVDQKQIEEQ…IKDKSAHSEN (90 aa)) adopt a coiled-coil conformation. 2 stretches are compositionally biased toward basic and acidic residues: residues 871 to 904 (KQIE…LQEV) and 973 to 982 (SADKSSKKMV).

The protein belongs to the OFD1 family. Homooligomer. Interacts with LCA5. Interacts with RUVBL1; the interaction is direct and may mediate interaction with the NuA4 histone acetyltransferase complex. Interacts with SDCCAG8; the interaction is direct. Interacts with MAP1LC3B. Interacts with C2CD3; OFD1 may act as a negative regulator of C2CD3. Forms a complex with KIAA0753/OFIP and CEP20/FOR20; the interaction with CEP20 is detected only in the presence of KIAA0753. Interacts with PCM1; this interaction may be mediated by KIAA0753/OFIP. Interacts with TBC1D31; regulates OFD1 activity in cilium assembly. Phosphorylated. Phosphorylation at Ser-735, by the cAMP-dependent protein kinase PKA, triggers ubiquitination and proteasomal degradation of OFD1. Also increases its interaction with TBC1D31 and regulates its function in ciliogenesis. Post-translationally, ubiquitinated by PJA2, upon phosphorylation at Ser-735 by PKA, leads to the proteasomal degradation of OFD1. As to expression, widely expressed. Expressed in 9 and 14 weeks old embryos in metanephric mesenchyme, oral mucosa, lung, heart, nasal and cranial cartilage, and brain. Expressed in metanephros, brain, tongue, and limb.

Its subcellular location is the cytoplasm. It is found in the cytoskeleton. It localises to the microtubule organizing center. The protein resides in the centrosome. The protein localises to the centriole. Its subcellular location is the cilium basal body. It is found in the nucleus. It localises to the centriolar satellite. In terms of biological role, component of the centrioles controlling mother and daughter centrioles length. Recruits to the centriole IFT88 and centriole distal appendage-specific proteins including CEP164. Involved in the biogenesis of the cilium, a centriole-associated function. The cilium is a cell surface projection found in many vertebrate cells required to transduce signals important for development and tissue homeostasis. Plays an important role in development by regulating Wnt signaling and the specification of the left-right axis. Only OFD1 localized at the centriolar satellites is removed by autophagy, which is an important step in the ciliogenesis regulation. The sequence is that of Centriole and centriolar satellite protein OFD1 (OFD1) from Homo sapiens (Human).